The sequence spans 214 residues: Adenylate kinase (214 aa).

10–15 (GGGKGT) contacts ATP. The segment at 30 to 59 (STGDMFRENVKGGTELGLKAKEYMDAGQLV) is NMP. Residues T31, R36, 57–59 (QLV), 85–88 (GFPR), and Q92 contribute to the AMP site. Residues 126 to 163 (GRRVCRVCGATFHVLFNAPKEDGKCDKCGGELYQRSDD) are LID. R127 contributes to the ATP binding site. Zn(2+) contacts are provided by C130 and C133. 136–137 (TF) serves as a coordination point for ATP. Residues C150 and C153 each contribute to the Zn(2+) site. AMP-binding residues include R160 and R171. Residue Q199 coordinates ATP.

This sequence belongs to the adenylate kinase family. As to quaternary structure, monomer.

It localises to the cytoplasm. The enzyme catalyses AMP + ATP = 2 ADP. It functions in the pathway purine metabolism; AMP biosynthesis via salvage pathway; AMP from ADP: step 1/1. Functionally, catalyzes the reversible transfer of the terminal phosphate group between ATP and AMP. Plays an important role in cellular energy homeostasis and in adenine nucleotide metabolism. The polypeptide is Adenylate kinase (Desulforudis audaxviator (strain MP104C)).